The sequence spans 86 residues: Elicitor peptide 5 (86 aa).

Positions 1–59 (MQQERDHKRDCCKLMPQTVKAFFKCLRFRRSSSSSSDMVKARARNEEKEEPSSIETSTR) are excised as a propeptide. A disordered region spans residues 31–86 (SSSSSSDMVKARARNEEKEEPSSIETSTRSLNVMRKGIRKQPVSSGKRGGVNDYDM). Residues 39–51 (VKARARNEEKEEP) show a composition bias toward basic and acidic residues.

The protein belongs to the brassicaceae elicitor peptide family.

Its function is as follows. Elicitor of plant defense. This Arabidopsis thaliana (Mouse-ear cress) protein is Elicitor peptide 5 (PEP5).